Here is a 470-residue protein sequence, read N- to C-terminus: BTB/POZ domain-containing protein 17 (470 aa).

An N-terminal signal peptide occupies residues Met-1–Ser-18. The region spanning Ser-53–Leu-122 is the BTB domain. In terms of domain architecture, BACK spans Val-161–Gln-261.

Its subcellular location is the secreted. The chain is BTB/POZ domain-containing protein 17 (btbd17) from Xenopus laevis (African clawed frog).